A 184-amino-acid polypeptide reads, in one-letter code: MKVIAVTGYKPFELGIFKNDHPGVECIKKALHRKLLTFVEDGLEWVIISGQLGVELWAAEVVFEMQVEYPDLKLAVFTPFLEQEENWKEDNREYYEFILSQADHVDSITKRKYESPEQFKLKNQFFIEKSDALLAVYDEEKPGSPKYIVESAKKKGEIENYHSYFILFSDLQDIIEEEQWNNAE.

The protein belongs to the UPF0398 family.

This Bacillus cereus (strain B4264) protein is UPF0398 protein BCB4264_A1614.